A 162-amino-acid chain; its full sequence is Allophycocyanin subunit beta (162 aa).

Asparagine 72 bears the N4-methylasparagine mark. Cysteine 82 contacts (2R,3E)-phycocyanobilin.

The protein belongs to the phycobiliprotein family. In terms of assembly, heterohexamer of two alpha chains, one alpha-B chain and three beta chains. Post-translationally, contains one covalently linked phycocyanobilin chromophore. The chromophore is added by phycocyanobilin lyase CpcS 1.

Its subcellular location is the cellular thylakoid membrane. Light-harvesting photosynthetic bile pigment-protein from the phycobiliprotein complex. Allophycocyanin has a maximum absorption at approximately 650 to 653 nanometers. In Nostoc sp. (strain PCC 7120 / SAG 25.82 / UTEX 2576), this protein is Allophycocyanin subunit beta (apcB).